The following is a 244-amino-acid chain: Lymphotoxin-beta (244 aa).

Topologically, residues 1 to 18 are cytoplasmic; that stretch reads MGALGLEGRGGRLQGRGS. A helical; Signal-anchor for type II membrane protein membrane pass occupies residues 19-48; it reads LLLAVAGATSLVTLLLAVPITVLAVLALVP. The Extracellular portion of the chain corresponds to 49–244; the sequence is QDQGGLVTDT…KTFFGAVMVG (196 aa). Residues 88 to 243 enclose the THD domain; the sequence is PAAHLIGAPL…GKTFFGAVMV (156 aa). Asparagine 222 is a glycosylation site (N-linked (GlcNAc...) asparagine).

This sequence belongs to the tumor necrosis factor family. Heterotrimer of either two LTB and one LTA subunits or (less prevalent) two LTA and one LTB subunits.

The protein localises to the membrane. Functionally, cytokine that binds to LTBR/TNFRSF3. May play a specific role in immune response regulation. Provides the membrane anchor for the attachment of the heterotrimeric complex to the cell surface. This is Lymphotoxin-beta (LTB) from Macaca mulatta (Rhesus macaque).